A 1241-amino-acid polypeptide reads, in one-letter code: DNA-directed RNA polymerase subunit beta (1241 aa).

The interval 1201 to 1224 (AEEEQDTDVDYITEDDFESPDPEI) is disordered.

It belongs to the RNA polymerase beta chain family. The RNAP catalytic core consists of 2 alpha, 1 beta, 1 beta' and 1 omega subunit. When a sigma factor is associated with the core the holoenzyme is formed, which can initiate transcription.

It carries out the reaction RNA(n) + a ribonucleoside 5'-triphosphate = RNA(n+1) + diphosphate. In terms of biological role, DNA-dependent RNA polymerase catalyzes the transcription of DNA into RNA using the four ribonucleoside triphosphates as substrates. In Alkaliphilus oremlandii (strain OhILAs) (Clostridium oremlandii (strain OhILAs)), this protein is DNA-directed RNA polymerase subunit beta.